A 230-amino-acid chain; its full sequence is 2,3-bisphosphoglycerate-dependent phosphoglycerate mutase 1 (230 aa).

Residues 8–15 (RHGQSEWN), 21–22 (TG), arginine 60, 87–90 (ERHY), lysine 98, 114–115 (RR), and 183–184 (GN) contribute to the substrate site. The Tele-phosphohistidine intermediate role is filled by histidine 9. Catalysis depends on glutamate 87, which acts as the Proton donor/acceptor.

It belongs to the phosphoglycerate mutase family. BPG-dependent PGAM subfamily.

It catalyses the reaction (2R)-2-phosphoglycerate = (2R)-3-phosphoglycerate. The protein operates within carbohydrate degradation; glycolysis; pyruvate from D-glyceraldehyde 3-phosphate: step 3/5. Catalyzes the interconversion of 2-phosphoglycerate and 3-phosphoglycerate. The protein is 2,3-bisphosphoglycerate-dependent phosphoglycerate mutase 1 of Lactobacillus johnsonii (strain CNCM I-12250 / La1 / NCC 533).